A 206-amino-acid polypeptide reads, in one-letter code: UPF0502 protein Acid_1185 (206 aa).

It belongs to the UPF0502 family.

The polypeptide is UPF0502 protein Acid_1185 (Solibacter usitatus (strain Ellin6076)).